The following is a 164-amino-acid chain: Peptidyl-prolyl cis-trans isomerase A-like 4C (164 aa).

The region spanning 7–163 is the PPIase cyclophilin-type domain; the sequence is FFDITVDGKP…KKITIADCGQ (157 aa).

The protein belongs to the cyclophilin-type PPIase family. PPIase A subfamily.

The protein resides in the cytoplasm. It catalyses the reaction [protein]-peptidylproline (omega=180) = [protein]-peptidylproline (omega=0). Functionally, PPIases accelerate the folding of proteins. It catalyzes the cis-trans isomerization of proline imidic peptide bonds in oligopeptides. The sequence is that of Peptidyl-prolyl cis-trans isomerase A-like 4C from Homo sapiens (Human).